The primary structure comprises 264 residues: 3-methyl-2-oxobutanoate hydroxymethyltransferase (264 aa).

2 residues coordinate Mg(2+): Asp44 and Asp83. 3-methyl-2-oxobutanoate is bound by residues 44 to 45 (DS), Asp83, and Lys111. Residue Glu113 participates in Mg(2+) binding. Residue Glu180 is the Proton acceptor of the active site.

Belongs to the PanB family. In terms of assembly, homodecamer; pentamer of dimers. Mg(2+) is required as a cofactor.

The protein localises to the cytoplasm. The catalysed reaction is 3-methyl-2-oxobutanoate + (6R)-5,10-methylene-5,6,7,8-tetrahydrofolate + H2O = 2-dehydropantoate + (6S)-5,6,7,8-tetrahydrofolate. Its pathway is cofactor biosynthesis; (R)-pantothenate biosynthesis; (R)-pantoate from 3-methyl-2-oxobutanoate: step 1/2. Catalyzes the reversible reaction in which hydroxymethyl group from 5,10-methylenetetrahydrofolate is transferred onto alpha-ketoisovalerate to form ketopantoate. This is 3-methyl-2-oxobutanoate hydroxymethyltransferase from Marinobacter nauticus (strain ATCC 700491 / DSM 11845 / VT8) (Marinobacter aquaeolei).